Here is a 1200-residue protein sequence, read N- to C-terminus: Metabotropic glycine receptor (1200 aa).

A signal peptide spans 1–24 (MGAMAYSLLFCLLLAHLGLGEVGA). The interval 25-62 (SLDPPGRPDSPRERTPRGKQHGQQLPRASAPDPSIPWS) is disordered. At 25-417 (SLDPPGRPDS…CFVQEDKYLR (393 aa)) the chain is on the extracellular side. The segment at 85 to 281 (YLYTGDFHQL…CENGSYKPGW (197 aa)) is cache-like region. N-linked (GlcNAc...) asparagine glycans are attached at residues Asn-98 and Asn-143. A disulfide bridge links Cys-99 with Cys-272. Ser-172 and Arg-173 together coordinate glycine. Asn-215 is a glycosylation site (N-linked (GlcNAc...) asparagine). The tract at residues 234–253 (LHRRGSNQGPRGLGHSWRRR) is disordered. Glu-271 serves as a coordination point for glycine. An N-linked (GlcNAc...) asparagine glycan is attached at Asn-274. Glycine is bound at residue Asp-307. Residue Asn-333 is glycosylated (N-linked (GlcNAc...) asparagine). A helical membrane pass occupies residues 418–439 (LAIISFQALCMLLDFVSMLVVY). Residues 440–451 (HFRKAKSIRASG) are Cytoplasmic-facing. Residues 452-474 (LILLETILFGSLLLYFPVVILYF) traverse the membrane as a helical segment. The Extracellular segment spans residues 475-478 (EPST). A helical membrane pass occupies residues 479-501 (FRCILLRWARLLGFATVYGTVTL). An intrachain disulfide couples Cys-481 to Cys-573. At 502 to 525 (KLHRVLKVFLSRTAQRIPYMTGGR) the chain is on the cytoplasmic side. Residues 526–547 (VMRMLAVIVLVVFWFLVGWTSS) traverse the membrane as a helical segment. Residues 548 to 576 (MCQNLERDILLVGQGQTSDHLTFNMCLID) lie on the Extracellular side of the membrane. A helical membrane pass occupies residues 577-597 (RWDYMTAVAEFLFLLWGIYLC). At 598–611 (YAVRTVPSAFHEPR) the chain is on the cytoplasmic side. The chain crosses the membrane as a helical span at residues 612–633 (YMAVAVHNELIITAIFHTIRFV). Residues 634-642 (LASRLQPDW) lie on the Extracellular side of the membrane. The chain crosses the membrane as a helical span at residues 643-664 (MLMLYFAHAHLTVTVTIGLLLI). Over 665–1200 (PKFSHSSNNP…SANKIPGPQK (536 aa)) the chain is Cytoplasmic. Phosphoserine is present on residues Ser-694, Ser-705, and Ser-708. Positions 757–875 (RITEIPETVS…EAESTESVPL (119 aa)) are disordered. 2 stretches are compositionally biased toward basic and acidic residues: residues 769–781 (CSKE…DHSA) and 819–828 (STYDHVRDQT). Lys-774 participates in a covalent cross-link: Glycyl lysine isopeptide (Lys-Gly) (interchain with G-Cter in ubiquitin). The span at 845-856 (ENSTLESLSSKK) shows a compositional bias: low complexity. 2 positions are modified to phosphoserine: Ser-865 and Ser-944. The disordered stretch occupies residues 947–988 (DNVETIPNSGHMEEPRKPQKSGIMKQQRVSLPTANPDVSSGI). The span at 973–988 (QRVSLPTANPDVSSGI) shows a compositional bias: polar residues. The short motif at 1000 to 1004 (VCPWE) is the VCPWE motif 1 element. Ser-1059 is modified (phosphoserine). Positions 1065–1069 (VCPWE) match the VCPWE motif 2 motif. Ser-1074 is subject to Phosphoserine. The disordered stretch occupies residues 1130-1160 (QMGDQEKQTSSSVDIIPGSCNSSNNSHQPLT). The short motif at 1165 to 1169 (VCPWE) is the VCPWE motif 3 element. The tract at residues 1177–1200 (NAERSVTLPASSALSANKIPGPQK) is disordered. Positions 1178–1191 (AERSVTLPASSALS) are enriched in polar residues.

Belongs to the G-protein coupled receptor 3 family. In terms of assembly, homodimer. Associates with the RGS7-GNB5 complex, promoting its localization to the cell membrane and regulating its GTPase activator activity. Interacts (via VCPWE motifs) with GNAO1. Interacts with GPC4. Interacts with EGFLAM. Highly expressed in brain. Expressed in several brain regions including the cerebral cortex, hippocampus, cerebellum and caudate putamen. Only expressed in neurons, and not in microglia, oligodendrocytes or astrocytes. Expressed in the visual center of the cerebral cortex. Also expressed in the eye, including photoreceptors, ganglion cells and trabecular meshwork.

It localises to the cell membrane. The protein resides in the postsynaptic cell membrane. Its subcellular location is the presynaptic cell membrane. It is found in the nucleus. Functionally, metabotropic receptor for glycine that controls synapse formation and function in the brain. Acts as an atypical G-protein coupled receptor that recruits and regulates the RGS7-GNB5 complex instead of activating G proteins. In absence of glycine ligand, promotes the GTPase activator activity of RGS7, increasing the GTPase activity of G protein alpha subunits, thereby driving them into their inactive GDP-bound form. Glycine-binding changes the conformation of the intracellular surface, inhibiting the GTPase activator activity of the RGS7-GNB5 complex, promoting G protein alpha subunits into their active GTP-bound form and regulating cAMP levels. Also able to bind taurine, a compound closely related to glycine, but with a two-fold lower affinity. Glycine receptor-dependent regulation of cAMP controls key ion channels, kinases and neurotrophic factors involved in neuronal excitability and synaptic transmission. Plays a pivotal role in regulating mood and cognition via its ability to regulate neuronal excitability in L2/L3 pyramidal neurons of the prefrontal cortex. Also involved in spatial learning by regulating hippocampal CA1 neuronal excitability. Acts as a synaptic organizer in the hippocampus, required for proper mossy fiber-CA3 neurocircuitry establishment, structure and function: induces presynaptic differentiation in contacting axons via its interaction with GPC4. In addition to glycine, may also act as a receptor for osteocalcin (Bglap or Bglap2) hormone: osteocalcin-binding initiates a signaling response that prevents neuronal apoptosis in the hippocampus and regulates the synthesis of neurotransmitters. This is Metabotropic glycine receptor from Mus musculus (Mouse).